Consider the following 303-residue polypeptide: Acetylglutamate kinase (303 aa).

Residues 76 to 77, Arg-98, and Asn-199 contribute to the substrate site; that span reads GG.

This sequence belongs to the acetylglutamate kinase family. ArgB subfamily.

The protein resides in the cytoplasm. It catalyses the reaction N-acetyl-L-glutamate + ATP = N-acetyl-L-glutamyl 5-phosphate + ADP. It functions in the pathway amino-acid biosynthesis; L-arginine biosynthesis; N(2)-acetyl-L-ornithine from L-glutamate: step 2/4. Catalyzes the ATP-dependent phosphorylation of N-acetyl-L-glutamate. This Clavibacter sepedonicus (Clavibacter michiganensis subsp. sepedonicus) protein is Acetylglutamate kinase.